Reading from the N-terminus, the 191-residue chain is GTP-binding protein CIN4 (191 aa).

GTP contacts are provided by residues 23 to 30, 69 to 73, and 131 to 134; these read GLDNSGKS, DIGGQ, and NKID.

Implicated in yeast microtubule function. The polypeptide is GTP-binding protein CIN4 (CIN4) (Saccharomyces cerevisiae (strain ATCC 204508 / S288c) (Baker's yeast)).